The primary structure comprises 532 residues: MLLLWLLLLLLLLVPLLAILWQQRSRGARPCWLISLQHRVAWGMLGWAAAWQQWRLDRSTLNVGQSQQQALMWCLKKAQGSCCLPREDTDMRTFRNHLPLTQTSHTQEQESEETLPSPASPQYHGDASLQATLLGLITLNKAYPEALAPGSTACVTPTSPWPCSVPWLGHALGRVSPDGAKDPRTLLLEALISPGLRVLEARTAVELLDVFVGLEADGEELAEAIAAGILGTLLPKRAAELKEALEQGPRGLARRLWPKLQVVVTLDSGGQAEAVAALRVLWCQGLAFFSPAYAASGGVVALNLWPERPQGSYLLPPGVPFIELLPIKEGTQEEAASTLLLTDAQREKEYELVLTNHTSLTRCRLGDVVQVVGTYNQCPVVRFTCRLGQTLNVRGEVTDETVFSVALAQAVGQWPGAKLLDHVCVESRVLDSCEGSAPHYEVFVELRGLRNLSEENRDKLDNCLQEASAQYKSLRFRGSVGPAKVHLVRPGSFRVLREALAAFSSSSCRPPEMPRVIRLRHLAQLLQKRVIS.

The signal sequence occupies residues M1 to A18. The interval L100 to Y123 is disordered. N356 and N451 each carry an N-linked (GlcNAc...) asparagine glycan.

The protein belongs to the GH3 family. In terms of tissue distribution, highly expressed in mammary tissues from mature virgins and at day 13 of pregnancy, and at lower level during lactation. Expressed at intermediate level in liver. Expressed at lower level in kidney, heart and brain.

It localises to the endoplasmic reticulum. The protein localises to the nucleus envelope. In Mus musculus (Mouse), this protein is GH3 domain-containing protein (Ghdc).